The following is a 638-amino-acid chain: ATP-dependent rRNA helicase spb4 (638 aa).

The Q motif signature appears at 14 to 42 (WDAVNPPLSEWVLDAVSSMGFTRMTPVQA). The region spanning 45-249 (IPLFMAHKDV…RVGLRNPVKV (205 aa)) is the Helicase ATP-binding domain. 58–65 (AVTGSGKT) lines the ATP pocket. Positions 197 to 200 (DEAD) match the DEAD box motif. Residues 283–437 (ALKHILNSVQ…PITVSDAEAA (155 aa)) enclose the Helicase C-terminal domain. Residues 521–629 (AYKDKQREKR…AKADKDAEEG (109 aa)) adopt a coiled-coil conformation. Residues 538 to 638 (MAESGQQQTT…GGDEEFTGFD (101 aa)) are disordered. The segment covering 574 to 597 (MKQVRQERKRWEKMTEEEKKKALE) has biased composition (basic and acidic residues). Acidic residues predominate over residues 625–638 (DAEEGGDEEFTGFD).

Belongs to the DEAD box helicase family. DDX55/SPB4 subfamily. As to quaternary structure, component of pre-60S ribosomal complexes.

Its subcellular location is the nucleus. It is found in the nucleolus. It catalyses the reaction ATP + H2O = ADP + phosphate + H(+). Its function is as follows. ATP-binding RNA helicase involved in the biogenesis of 60S ribosomal subunits. Binds 90S pre-ribosomal particles and dissociates from pre-60S ribosomal particles after processing of 27SB pre-rRNA. Required for the normal formation of 18S rRNA through the processing of pre-rRNAs at sites A0, A1 and A2, and the normal formation of 25S and 5.8S rRNAs through the processing of pre-rRNAs at sites C1 and C2. The polypeptide is ATP-dependent rRNA helicase spb4 (Emericella nidulans (strain FGSC A4 / ATCC 38163 / CBS 112.46 / NRRL 194 / M139) (Aspergillus nidulans)).